A 390-amino-acid polypeptide reads, in one-letter code: MLRFLNAGESHGPALTAIIEGYPSNVKITTDRINKELARRQKGYGRGGRMKIEKDTVEILSGVRFGITLGSPITLVVRNKDWENWTDIMAIEGDSTNKRQILEPRPGHADLTGGIKYGFYDLRNILERASARETTTRVAVGALCKILLEDIGIKIGSYVLSIGEKKIDKSEIESISYEDRFNNAENSELRLPILGKDEEFKEYIDKAKEDGESLGGIFEVYALNVPVGLGSYSQWDTRLDGKIAQAIMSIQAIKGVEIGEGFNLAYLPGSQAHDEIFYSKERGFYRKTNRAGGLEGGMTNGEPIIVRAAMKPIPTLMRHKSLQSVNVITKEPFDAAKERSDITAVPAAAVVAESMLAFVLAREILEKFGSDNWIQIKERIEKYRQDVLNY.

Residues Arg-40 and Arg-46 each contribute to the NADP(+) site. Residues 128-130, 251-252, Gly-296, 311-315, and Arg-339 each bind FMN; these read RAS, QA, and KPIPT.

The protein belongs to the chorismate synthase family. As to quaternary structure, homotetramer. Requires FMNH2 as cofactor.

The catalysed reaction is 5-O-(1-carboxyvinyl)-3-phosphoshikimate = chorismate + phosphate. Its pathway is metabolic intermediate biosynthesis; chorismate biosynthesis; chorismate from D-erythrose 4-phosphate and phosphoenolpyruvate: step 7/7. Its function is as follows. Catalyzes the anti-1,4-elimination of the C-3 phosphate and the C-6 proR hydrogen from 5-enolpyruvylshikimate-3-phosphate (EPSP) to yield chorismate, which is the branch point compound that serves as the starting substrate for the three terminal pathways of aromatic amino acid biosynthesis. This reaction introduces a second double bond into the aromatic ring system. The polypeptide is Chorismate synthase (Sulfurihydrogenibium sp. (strain YO3AOP1)).